A 417-amino-acid chain; its full sequence is Snake venom metalloproteinase aculysin-1 (417 aa).

The signal sequence occupies residues 1 to 20; sequence MIQVLLVTICLAAFPYQGSS. A propeptide spanning residues 21 to 189 is cleaved from the precursor; it reads IMLESGKVND…KKPSWLNLTP (169 aa). In terms of domain architecture, Peptidase M12B spans 197–392; that stretch reads TSVNLQLIVD…KKPKCIHKKS (196 aa). 3 disulfides stabilise this stretch: Cys308-Cys387, Cys349-Cys371, and Cys351-Cys354. A Zn(2+)-binding site is contributed by His333. The active site involves Glu334. Residues His337 and His343 each coordinate Zn(2+). Positions 393 to 417 are excised as a propeptide; sequence LKTDTVSTSVSGNEPLDDNVDGFHA. Residues 398-417 form a disordered region; sequence VSTSVSGNEPLDDNVDGFHA. Acidic residues predominate over residues 407 to 417; sequence PLDDNVDGFHA.

The protein belongs to the venom metalloproteinase (M12B) family. P-I subfamily. As to quaternary structure, monomer. Requires Zn(2+) as cofactor. In terms of tissue distribution, expressed by the venom gland.

It localises to the secreted. Its function is as follows. This protein is an alkaline zinc metalloprotease from snake venom that possesses weak hemorrhagic activity. The sequence is that of Snake venom metalloproteinase aculysin-1 from Deinagkistrodon acutus (Hundred-pace snake).